Here is a 607-residue protein sequence, read N- to C-terminus: Rap1 GTPase-GDP dissociation stimulator 1-B (607 aa).

5 ARM repeats span residues 79–118 (ELMR…NICY), 170–211 (DSLQ…NLAE), 347–390 (DGNC…NLAI), 391–431 (PVVN…MLID), and 479–519 (SKDV…LIAA).

Interacts with ralB. Probably interacts with the post-translationally isoprenylated (geranyl-geranylation) forms of ral proteins. Interacts with both GDP-bound and GTP-bound forms of ralA, but interaction is much stronger with ralA-GDP.

The protein localises to the cytoplasm. It localises to the cytosol. Its subcellular location is the endoplasmic reticulum. The protein resides in the mitochondrion. Stimulates GDP/GTP exchange reaction of a group of small GTP-binding proteins (G proteins) including Rap1a/Rap1b, RhoA, RhoB and KRas, by stimulating the dissociation of GDP from and the subsequent binding of GTP to each small G protein. The protein is Rap1 GTPase-GDP dissociation stimulator 1-B (rap1gds1-b) of Xenopus laevis (African clawed frog).